A 133-amino-acid chain; its full sequence is Protein PROTON GRADIENT REGULATION 5, chloroplastic (133 aa).

The N-terminal 60 residues, 1-60, are a transit peptide targeting the chloroplast; it reads MAAASISAIGCNQTLIGTSFYGGWGSSISGEDYQTMLSKTVAPPQQARVSRKAIRAVPMM.

The protein belongs to the PGR5 family. As to quaternary structure, interacts with PGRL1A and PGRL1B. In terms of processing, disulfide bonds; Cys-11 and Cys-105 are probably involved in the formation of disulfide bridges with 'Cys-300' and 'Cys-303' of PGRL1A. 'Cys-272' and 'Cys-275' of PGRL1A may also be used to form the disulfide bridges, but in this case the cyclic electron flow is lost.

It localises to the plastid. Its subcellular location is the chloroplast thylakoid membrane. Critical for growth under fluctuating-light conditions. Involved in the regulation of the cyclic electron flow (CEF) around Photosystem I. Essential for the reduction of PGRL1A by ferredoxin and for photoprotection. Contributes to maximize photosynthesis efficiency after a long dark adaptation via the regulation of non-photochemical quenching (NPQ); acts independently from DLDG1. Promotes the induction of steady-state proton motive force (pmf) and energy-dependent quenching (qE). This Arabidopsis thaliana (Mouse-ear cress) protein is Protein PROTON GRADIENT REGULATION 5, chloroplastic.